A 1358-amino-acid chain; its full sequence is Retrotransposon-like protein 1 (1358 aa).

Disordered regions lie at residues 1 to 159 and 563 to 616; these read MIEP…TEHS and ADVF…TAPW. A compositionally biased stretch (low complexity) spans 19–30; sequence SSKQMESSEGSS. Acidic residues predominate over residues 65-79; it reads EMEELPTDLLQDMEE. Residues 131–149 are compositionally biased toward basic and acidic residues; the sequence is AREEQEAHTDLKESGREET. Over residues 583-592 the composition is skewed to acidic residues; that stretch reads GSDDLSESEP. The next 2 membrane-spanning stretches (helical) occupy residues 1083 to 1099 and 1126 to 1146; these read LLYWKNTLALAAILVLL and LILDSSLIAGSSITTAITQLL. 2 disordered regions span residues 1250 to 1283 and 1338 to 1358; these read DGLQDTSQDKQDNDVQEAPPSHTAATHPPRPRHL and QPREQARLEELPDEDEDANLD. The span at 1267–1276 shows a compositional bias: low complexity; that stretch reads APPSHTAATH. The segment covering 1338 to 1347 has biased composition (basic and acidic residues); that stretch reads QPREQARLEE. The segment covering 1348 to 1358 has biased composition (acidic residues); sequence LPDEDEDANLD.

The protein resides in the membrane. Plays an essential role in capillaries endothelial cells for the maintenance of feto-maternal interface and for development of the placenta. This Homo sapiens (Human) protein is Retrotransposon-like protein 1 (RTL1).